Reading from the N-terminus, the 154-residue chain is Interleukin-2 (154 aa).

A signal peptide spans Met1–Ser20. A glycan (O-linked (GalNAc...) threonine) is linked at Thr23. Residues Cys78 and Cys126 are joined by a disulfide bond.

It belongs to the IL-2 family.

The protein localises to the secreted. Its function is as follows. Cytokine produced by activated CD4-positive helper T-cells and to a lesser extend activated CD8-positive T-cells and natural killer (NK) cells that plays pivotal roles in the immune response and tolerance. Binds to a receptor complex composed of either the high-affinity trimeric IL-2R (IL2RA/CD25, IL2RB/CD122 and IL2RG/CD132) or the low-affinity dimeric IL-2R (IL2RB and IL2RG). Interaction with the receptor leads to oligomerization and conformation changes in the IL-2R subunits resulting in downstream signaling starting with phosphorylation of JAK1 and JAK3. In turn, JAK1 and JAK3 phosphorylate the receptor to form a docking site leading to the phosphorylation of several substrates including STAT5. This process leads to activation of several pathways including STAT, phosphoinositide-3-kinase/PI3K and mitogen-activated protein kinase/MAPK pathways. Functions as a T-cell growth factor and can increase NK-cell cytolytic activity as well. Promotes strong proliferation of activated B-cells and subsequently immunoglobulin production. Plays a pivotal role in regulating the adaptive immune system by controlling the survival and proliferation of regulatory T-cells, which are required for the maintenance of immune tolerance. Moreover, participates in the differentiation and homeostasis of effector T-cell subsets, including Th1, Th2, Th17 as well as memory CD8-positive T-cells. The chain is Interleukin-2 (IL2) from Mirounga angustirostris (Northern elephant seal).